We begin with the raw amino-acid sequence, 434 residues long: Enolase (434 aa).

Residue Q165 coordinates (2R)-2-phosphoglycerate. E207 acts as the Proton donor in catalysis. D244, E291, and D318 together coordinate Mg(2+). Residues K343, R372, S373, and K394 each coordinate (2R)-2-phosphoglycerate. The active-site Proton acceptor is the K343.

It belongs to the enolase family. Mg(2+) is required as a cofactor.

It is found in the cytoplasm. It localises to the secreted. Its subcellular location is the cell surface. The enzyme catalyses (2R)-2-phosphoglycerate = phosphoenolpyruvate + H2O. It participates in carbohydrate degradation; glycolysis; pyruvate from D-glyceraldehyde 3-phosphate: step 4/5. In terms of biological role, catalyzes the reversible conversion of 2-phosphoglycerate (2-PG) into phosphoenolpyruvate (PEP). It is essential for the degradation of carbohydrates via glycolysis. The polypeptide is Enolase (Staphylococcus haemolyticus (strain JCSC1435)).